The sequence spans 138 residues: Ferredoxin-2 (138 aa).

Residues 27–117 (ADANLQSTDF…DAKIVYNLKH (91 aa)) form the 2Fe-2S ferredoxin-type domain. C62, C67, C70, and C100 together coordinate [2Fe-2S] cluster.

This sequence belongs to the 2Fe2S plant-type ferredoxin family. [2Fe-2S] cluster is required as a cofactor.

Ferredoxins are iron-sulfur proteins that transfer electrons in a wide variety of metabolic reactions. The sequence is that of Ferredoxin-2 (fer2) from Haloarcula marismortui (strain ATCC 43049 / DSM 3752 / JCM 8966 / VKM B-1809) (Halobacterium marismortui).